Reading from the N-terminus, the 244-residue chain is Protein crossbronx (244 aa).

The UBC core domain occupies 20-176; the sequence is QQEYKILAEY…VLENIKESKE (157 aa).

This sequence belongs to the ubiquitin-conjugating enzyme family. FTS subfamily.

In Drosophila persimilis (Fruit fly), this protein is Protein crossbronx (cbx).